Here is a 938-residue protein sequence, read N- to C-terminus: Protein translocase subunit SecA 1 (938 aa).

ATP contacts are provided by residues Gln-84, 102 to 106 (GEGKT), and Asp-491. Positions 865-938 (QTGGVATKER…QKTGRHAKRR (74 aa)) are disordered. Positions 918–927 (TRKERREAAR) are enriched in basic and acidic residues.

Belongs to the SecA family. In terms of assembly, monomer and homodimer. Part of the essential Sec protein translocation apparatus which comprises SecA, SecYEG and auxiliary proteins SecDF. Other proteins may also be involved.

The protein localises to the cell membrane. It is found in the cytoplasm. The catalysed reaction is ATP + H2O + cellular proteinSide 1 = ADP + phosphate + cellular proteinSide 2.. Its function is as follows. Part of the Sec protein translocase complex. Interacts with the SecYEG preprotein conducting channel. Has a central role in coupling the hydrolysis of ATP to the transfer of proteins into and across the cell membrane, serving as an ATP-driven molecular motor driving the stepwise translocation of polypeptide chains across the membrane. The protein is Protein translocase subunit SecA 1 of Mycolicibacterium vanbaalenii (strain DSM 7251 / JCM 13017 / BCRC 16820 / KCTC 9966 / NRRL B-24157 / PYR-1) (Mycobacterium vanbaalenii).